A 338-amino-acid chain; its full sequence is Glycerol-3-phosphate dehydrogenase [NAD(P)+] (338 aa).

Positions 13, 14, and 108 each coordinate NADPH. The sn-glycerol 3-phosphate site is built by K108, G139, and S141. A143 lines the NADPH pocket. K194, D247, S257, R258, and N259 together coordinate sn-glycerol 3-phosphate. The active-site Proton acceptor is K194. R258 contributes to the NADPH binding site. NADPH is bound by residues V282 and E284.

The protein belongs to the NAD-dependent glycerol-3-phosphate dehydrogenase family.

The protein localises to the cytoplasm. The enzyme catalyses sn-glycerol 3-phosphate + NAD(+) = dihydroxyacetone phosphate + NADH + H(+). It carries out the reaction sn-glycerol 3-phosphate + NADP(+) = dihydroxyacetone phosphate + NADPH + H(+). Its pathway is membrane lipid metabolism; glycerophospholipid metabolism. In terms of biological role, catalyzes the reduction of the glycolytic intermediate dihydroxyacetone phosphate (DHAP) to sn-glycerol 3-phosphate (G3P), the key precursor for phospholipid synthesis. The polypeptide is Glycerol-3-phosphate dehydrogenase [NAD(P)+] (Listeria monocytogenes serotype 4b (strain CLIP80459)).